We begin with the raw amino-acid sequence, 52 residues long: MARFPEAEARIFRKYICMRCGATNPWKAKKCRKCGYKGLRPKAREPRGGMGR.

The protein belongs to the eukaryotic ribosomal protein eL40 family.

The chain is Large ribosomal subunit protein eL40 from Thermococcus onnurineus (strain NA1).